Here is a 1391-residue protein sequence, read N- to C-terminus: Nuclear pore complex protein Nup155 (1391 aa).

A glycan (O-linked (GlcNAc) serine) is linked at Ser526. Disordered regions lie at residues 604 to 630 (SSSP…AQPP) and 985 to 1012 (QSKA…NMLS). Ser1057 is modified (phosphoserine).

Belongs to the non-repetitive/WGA-negative nucleoporin family. In terms of assembly, interacts with GLE1 and NUP35/NUP53. Able to form a heterotrimer with GLE1 and NUP42 in vitro. Forms a complex with NUP35, NUP93, NUP205 and lamin B. Phosphorylated. Phosphorylation and dephosphorylation may be important for the function of NUP155 and may play a role in the reversible disassembly of the nuclear pore complex during mitosis. Post-translationally, disulfide-linked to NUP62. The inner channel of the NPC has a different redox environment from the cytoplasm and allows the formation of interchain disulfide bonds between some nucleoporins, the significant increase of these linkages upon oxidative stress reduces the permeability of the NPC.

Its subcellular location is the nucleus. It is found in the nuclear pore complex. The protein resides in the nucleus membrane. Functionally, essential component of nuclear pore complex. Could be essessential for embryogenesis. Nucleoporins may be involved both in binding and translocating proteins during nucleocytoplasmic transport. The protein is Nuclear pore complex protein Nup155 (Nup155) of Mus musculus (Mouse).